We begin with the raw amino-acid sequence, 453 residues long: Trigger factor (453 aa).

A PPIase FKBP-type domain is found at 171-256 (GDRVTISFKG…ATVLEAPQES (86 aa)).

The protein belongs to the FKBP-type PPIase family. Tig subfamily.

The protein resides in the cytoplasm. The enzyme catalyses [protein]-peptidylproline (omega=180) = [protein]-peptidylproline (omega=0). Involved in protein export. Acts as a chaperone by maintaining the newly synthesized protein in an open conformation. Functions as a peptidyl-prolyl cis-trans isomerase. The protein is Trigger factor of Rhodopseudomonas palustris (strain BisB18).